A 155-amino-acid chain; its full sequence is Phospholipase A2 A2-actitoxin-Ucs2a (155 aa).

The N-terminal stretch at 1–19 (MKNNIILVILLGISVFVDC) is a signal peptide. Residues 20-42 (LPLNDQEEDKSLNAQESEVSAVQ) constitute a propeptide that is removed on maturation. Intrachain disulfides connect Cys-55–Cys-118, Cys-71–Cys-87, Cys-86–Cys-143, Cys-93–Cys-136, Cys-100–Cys-129, and Cys-122–Cys-134. The Ca(2+) site is built by Gly-72 and Gly-74. The active site involves His-90. Residue Asp-91 participates in Ca(2+) binding. Asp-137 is a catalytic residue.

It belongs to the phospholipase A2 family. Ca(2+) is required as a cofactor.

The protein localises to the secreted. It localises to the nematocyst. It carries out the reaction a 1,2-diacyl-sn-glycero-3-phosphocholine + H2O = a 1-acyl-sn-glycero-3-phosphocholine + a fatty acid + H(+). Functionally, PLA2 catalyzes the calcium-dependent hydrolysis of the 2-acyl groups in 3-sn-phosphoglycerides. The polypeptide is Phospholipase A2 A2-actitoxin-Ucs2a (Urticina crassicornis (Mottled anemone)).